The following is a 466-amino-acid chain: Delta-1 crystallin (466 aa).

This sequence belongs to the lyase 1 family. Argininosuccinate lyase subfamily. In terms of assembly, homotetramer. As to expression, eye lens.

Delta crystallin, the principal crystallin in embryonic lens, is found only in birds and reptiles. Despite possessing the necessary catalytic residues, this protein does not function as an enzymatically active argininosuccinate lyase. The polypeptide is Delta-1 crystallin (ASL1) (Anas platyrhynchos (Mallard)).